The chain runs to 705 residues: Elongation factor G (705 aa).

Residues 8 to 294 form the tr-type G domain; that stretch reads ELCRNFGIMA…SVIDYLPSPL (287 aa). GTP-binding positions include 17–24, 92–96, and 146–149; these read AHIDAGKT, DTPGH, and NKMD.

Belongs to the TRAFAC class translation factor GTPase superfamily. Classic translation factor GTPase family. EF-G/EF-2 subfamily.

It is found in the cytoplasm. Its function is as follows. Catalyzes the GTP-dependent ribosomal translocation step during translation elongation. During this step, the ribosome changes from the pre-translocational (PRE) to the post-translocational (POST) state as the newly formed A-site-bound peptidyl-tRNA and P-site-bound deacylated tRNA move to the P and E sites, respectively. Catalyzes the coordinated movement of the two tRNA molecules, the mRNA and conformational changes in the ribosome. In Cereibacter sphaeroides (strain ATCC 17023 / DSM 158 / JCM 6121 / CCUG 31486 / LMG 2827 / NBRC 12203 / NCIMB 8253 / ATH 2.4.1.) (Rhodobacter sphaeroides), this protein is Elongation factor G.